The following is a 57-amino-acid chain: uncharacterized protein (57 aa).

Residues 34-54 traverse the membrane as a helical segment; sequence AALLDAAALVVIPGLLTAAAV.

It is found in the membrane. This is an uncharacterized protein from Dictyostelium discoideum (Social amoeba).